A 305-amino-acid polypeptide reads, in one-letter code: UDP-3-O-acyl-N-acetylglucosamine deacetylase (305 aa).

3 residues coordinate Zn(2+): His78, His237, and Asp241. Residue His264 is the Proton donor of the active site.

The protein belongs to the LpxC family. Zn(2+) is required as a cofactor.

The catalysed reaction is a UDP-3-O-[(3R)-3-hydroxyacyl]-N-acetyl-alpha-D-glucosamine + H2O = a UDP-3-O-[(3R)-3-hydroxyacyl]-alpha-D-glucosamine + acetate. It participates in glycolipid biosynthesis; lipid IV(A) biosynthesis; lipid IV(A) from (3R)-3-hydroxytetradecanoyl-[acyl-carrier-protein] and UDP-N-acetyl-alpha-D-glucosamine: step 2/6. Its function is as follows. Catalyzes the hydrolysis of UDP-3-O-myristoyl-N-acetylglucosamine to form UDP-3-O-myristoylglucosamine and acetate, the committed step in lipid A biosynthesis. This chain is UDP-3-O-acyl-N-acetylglucosamine deacetylase, found in Burkholderia cenocepacia (strain ATCC BAA-245 / DSM 16553 / LMG 16656 / NCTC 13227 / J2315 / CF5610) (Burkholderia cepacia (strain J2315)).